The following is a 213-amino-acid chain: Nucleolar protein 12 (213 aa).

Positions 32-95 (GFHKRKVERK…RLVTAKTESV (64 aa)) form a coiled coil. The disordered stretch occupies residues 117–213 (ARLLGLPTPE…LTGKARHSGE (97 aa)). Composition is skewed to basic residues over residues 169-181 (AHSR…KRLR) and 197-213 (SKTR…HSGE).

The protein belongs to the RRP17 family. Interacts with KIAA1191.

Its subcellular location is the nucleus. It is found in the nucleolus. It localises to the cytoplasm. In terms of biological role, multifunctional RNA binding protein that plays a role in RNA metabolism and DNA maintenance. Participates in the resolution of DNA stress and the maintenance of genome integrity by localizing to sites of DNA insults. Also plays a role in proper nucleolar organization by limiting nucleolar size and regulating nucleolar number. Mechanistically, regulates the nucleolar levels of fibrillarin and nucleolin, two key players in pre-rRNA processing and ribosome assembly. The protein is Nucleolar protein 12 (NOL12) of Bos taurus (Bovine).